A 554-amino-acid chain; its full sequence is Dihydroxy-acid dehydratase (554 aa).

Aspartate 78 is a binding site for Mg(2+). A [2Fe-2S] cluster-binding site is contributed by cysteine 119. The Mg(2+) site is built by aspartate 120 and lysine 121. Lysine 121 is subject to N6-carboxylysine. Residue cysteine 192 coordinates [2Fe-2S] cluster. Mg(2+) is bound at residue glutamate 443. Serine 469 (proton acceptor) is an active-site residue.

This sequence belongs to the IlvD/Edd family. In terms of assembly, homodimer. It depends on [2Fe-2S] cluster as a cofactor. Mg(2+) is required as a cofactor.

The catalysed reaction is (2R)-2,3-dihydroxy-3-methylbutanoate = 3-methyl-2-oxobutanoate + H2O. It catalyses the reaction (2R,3R)-2,3-dihydroxy-3-methylpentanoate = (S)-3-methyl-2-oxopentanoate + H2O. It participates in amino-acid biosynthesis; L-isoleucine biosynthesis; L-isoleucine from 2-oxobutanoate: step 3/4. Its pathway is amino-acid biosynthesis; L-valine biosynthesis; L-valine from pyruvate: step 3/4. Its function is as follows. Functions in the biosynthesis of branched-chain amino acids. Catalyzes the dehydration of (2R,3R)-2,3-dihydroxy-3-methylpentanoate (2,3-dihydroxy-3-methylvalerate) into 2-oxo-3-methylpentanoate (2-oxo-3-methylvalerate) and of (2R)-2,3-dihydroxy-3-methylbutanoate (2,3-dihydroxyisovalerate) into 2-oxo-3-methylbutanoate (2-oxoisovalerate), the penultimate precursor to L-isoleucine and L-valine, respectively. The polypeptide is Dihydroxy-acid dehydratase (Shouchella clausii (strain KSM-K16) (Alkalihalobacillus clausii)).